We begin with the raw amino-acid sequence, 41 residues long: Large ribosomal subunit protein bL36B (41 aa).

Belongs to the bacterial ribosomal protein bL36 family.

In Haemophilus ducreyi (strain 35000HP / ATCC 700724), this protein is Large ribosomal subunit protein bL36B.